The sequence spans 452 residues: tRNA-2-methylthio-N(6)-dimethylallyladenosine synthase (452 aa).

The 116-residue stretch at 3-118 folds into the MTTase N-terminal domain; it reads KKVFIKTYGC…LPQLLAERER (116 aa). [4Fe-4S] cluster is bound by residues C12, C49, C81, C155, C159, and C162. The region spanning 141–379 is the Radical SAM core domain; that stretch reads RVEGASAFVS…QTVINDSIKR (239 aa). In terms of domain architecture, TRAM spans 382–445; that stretch reads ESRLGTVQRI…SFTLRGEVVT (64 aa).

The protein belongs to the methylthiotransferase family. MiaB subfamily. Monomer. [4Fe-4S] cluster serves as cofactor.

The protein localises to the cytoplasm. The enzyme catalyses N(6)-dimethylallyladenosine(37) in tRNA + (sulfur carrier)-SH + AH2 + 2 S-adenosyl-L-methionine = 2-methylsulfanyl-N(6)-dimethylallyladenosine(37) in tRNA + (sulfur carrier)-H + 5'-deoxyadenosine + L-methionine + A + S-adenosyl-L-homocysteine + 2 H(+). In terms of biological role, catalyzes the methylthiolation of N6-(dimethylallyl)adenosine (i(6)A), leading to the formation of 2-methylthio-N6-(dimethylallyl)adenosine (ms(2)i(6)A) at position 37 in tRNAs that read codons beginning with uridine. The polypeptide is tRNA-2-methylthio-N(6)-dimethylallyladenosine synthase (Albidiferax ferrireducens (strain ATCC BAA-621 / DSM 15236 / T118) (Rhodoferax ferrireducens)).